The chain runs to 252 residues: MTEPILQIRDLSVYYNQKKTLKDVSLDLYPNEITALIGPSGSGKSTLLRSINRMNDLNPEVTITGSIVYNGHNIYSPRTDTVDLRKEIGMVFQQPNPFPMSIYENVVYGLRLKGIRDKSILDHAVESSLKGASIWNEVKDRLHDSAVGLSGGQQQRVCIARVLATSPRIILLDEPTSALDPISAGKIEETLLLLKKDYTLAIVTRSMQQASRLSDRTGFFLEGDLLECGPTKAMFMNPKRKETEDYISGKFG.

The 242-residue stretch at 6–247 folds into the ABC transporter domain; that stretch reads LQIRDLSVYY…PKRKETEDYI (242 aa). 38–45 serves as a coordination point for ATP; the sequence is GPSGSGKS.

Belongs to the ABC transporter superfamily. Phosphate importer (TC 3.A.1.7) family. As to quaternary structure, the complex is composed of two ATP-binding proteins (PstB), two transmembrane proteins (PstC and PstA) and a solute-binding protein (PstS).

The protein localises to the cell membrane. The enzyme catalyses phosphate(out) + ATP + H2O = ADP + 2 phosphate(in) + H(+). Part of the ABC transporter complex PstSACB involved in phosphate import. Responsible for energy coupling to the transport system. In Streptococcus pyogenes serotype M1, this protein is Phosphate import ATP-binding protein PstB 1.